A 186-amino-acid chain; its full sequence is TATA-box-binding protein E (186 aa).

2 consecutive repeat copies span residues 10–86 (IENV…FDKL) and 101–179 (VQNI…TSRL).

The protein belongs to the TBP family.

General factor that plays a role in the activation of archaeal genes transcribed by RNA polymerase. Binds specifically to the TATA box promoter element which lies close to the position of transcription initiation. This is TATA-box-binding protein E (tbpE) from Halobacterium salinarum (strain ATCC 700922 / JCM 11081 / NRC-1) (Halobacterium halobium).